The chain runs to 82 residues: Cytochrome c-551 (82 aa).

Heme c-binding residues include C12, C15, H16, and M61.

Binds 1 heme c group covalently per subunit.

In Azotobacter vinelandii, this protein is Cytochrome c-551.